The sequence spans 279 residues: Phosphonates import ATP-binding protein PhnC (279 aa).

Residues 2-245 form the ABC transporter domain; the sequence is FQLKNVTRQF…AVAAIYGAET (244 aa). 34 to 41 is an ATP binding site; sequence GRSGAGKS.

It belongs to the ABC transporter superfamily. Phosphonates importer (TC 3.A.1.9.1) family. The complex is composed of two ATP-binding proteins (PhnC), two transmembrane proteins (PhnE) and a solute-binding protein (PhnD).

Its subcellular location is the cell inner membrane. It catalyses the reaction phosphonate(out) + ATP + H2O = phosphonate(in) + ADP + phosphate + H(+). Its function is as follows. Part of the ABC transporter complex PhnCDE involved in phosphonates import. Responsible for energy coupling to the transport system. The sequence is that of Phosphonates import ATP-binding protein PhnC from Rhizobium meliloti (strain 1021) (Ensifer meliloti).